The sequence spans 241 residues: Ribonuclease PH (241 aa).

Residues R89 and 127-129 each bind phosphate; that span reads GTR.

The protein belongs to the RNase PH family. In terms of assembly, homohexameric ring arranged as a trimer of dimers.

The enzyme catalyses tRNA(n+1) + phosphate = tRNA(n) + a ribonucleoside 5'-diphosphate. Its function is as follows. Phosphorolytic 3'-5' exoribonuclease that plays an important role in tRNA 3'-end maturation. Removes nucleotide residues following the 3'-CCA terminus of tRNAs; can also add nucleotides to the ends of RNA molecules by using nucleoside diphosphates as substrates, but this may not be physiologically important. Probably plays a role in initiation of 16S rRNA degradation (leading to ribosome degradation) during starvation. In Xanthomonas axonopodis pv. citri (strain 306), this protein is Ribonuclease PH.